The primary structure comprises 306 residues: Tryptophan 2,3-dioxygenase (306 aa).

Substrate contacts are provided by residues 75–79 (FIIQH), Y137, and R141. Residue H264 participates in heme binding. T278 serves as a coordination point for substrate.

This sequence belongs to the tryptophan 2,3-dioxygenase family. In terms of assembly, homotetramer. Heme serves as cofactor.

The catalysed reaction is L-tryptophan + O2 = N-formyl-L-kynurenine. It participates in amino-acid degradation; L-tryptophan degradation via kynurenine pathway; L-kynurenine from L-tryptophan: step 1/2. Heme-dependent dioxygenase that catalyzes the oxidative cleavage of the L-tryptophan (L-Trp) pyrrole ring and converts L-tryptophan to N-formyl-L-kynurenine. Catalyzes the oxidative cleavage of the indole moiety. In Paraburkholderia phytofirmans (strain DSM 17436 / LMG 22146 / PsJN) (Burkholderia phytofirmans), this protein is Tryptophan 2,3-dioxygenase.